The primary structure comprises 3707 residues: MGQRAVGSLLLGLLLHARLLAVTHGLRAYDGLSLPEDTETVTASRYGWTYSYLSDDEDLLADDASGDGLGSGDVGSGDFQMVYFRALVNFTRSIEYSPQLEDASAKEFREVSEAVVEKLEPEYRKIPGDQIVSVVFIKELDGWVFVELDVGSEGNADGSQIQEVLHTVVSSGSIGPYVTSPWGFKFRRLGTVPQFPRVCTETEFACHSYNECVALEYRCDRRPDCRDMSDELNCEEPVPELSSSTPAVGKVSPLPLWPEAATTPPPPVTHGPQFLLPSVPGPSACGPQEASCHSGHCIPRDYLCDGQEDCRDGSDELGCASPPPCEPNEFACENGHCALKLWRCDGDFDCEDRTDEANCSVKQPGEVCGPTHFQCVSTNRCIPASFHCDEESDCPDRSDEFGCMPPQVVTPPQQSIQASRGQTVTFTCVATGVPTPIINWRLNWGHIPAHPRVTMTSEGGRGTLIIRDVKEADQGAYTCEAMNSRGMVFGIPDGVLELVPQRGPCPDGHFYLEDSASCLPCFCFGVTNVCQSSLRFRDQIRLSFDQPNDFKGVNVTMPSQPGVPPLSSTQLQIDPALQEFQLVDLSRRFLVHDAFWALPKQFLGNKVDSYGGFLRYKVRYELARGMLEPVQKPDVILVGAGYRLHSRGHTPTHPGTLNQRQVQLSEEHWVHESGRPVQRAEMLQALASLEAVLLQTVYNTKMASVGLSDIVMDTTVTHTTIHGRAHSVEECRCPIGYSGLSCESCDAHFTRVPGGPYLGTCSGCNCNGHASSCDPVYGHCLNCQHNTEGPQCDKCKPGFFGDATKATATACRPCPCPYIDASRRFSDTCFLDTDGQATCDACAPGYTGRRCESCAPGYEGNPIQPGGKCRPTTQEIVRCDERGSLGTSGETCRCKNNVVGRLCNECSDGSFHLSKQNPDGCLKCFCMGVSRQCSSSSWSRAQVLGASEQPSQFSLSNAAGTHTTSEGVSSPAPGELSFSSFHNLLSEPYFWSLPASFRGDKVTSYGGELRFTVMQRPRPSSAPLHRQPLVVLQGNNIVLEHHASRDPSPGQPSNFIVPFQEQAWQRPDGQPATREHLLMALAGIDALLIQASYTQQPAESRLSGISMDVAVPENTGQDSAREVEQCTCPPGYRGPSCQDCDTGYTRVPSGLYLGTCERCNCHGHSETCEPETGACQSCQHHTEGASCEQCQPGYYGDAQRGTPQDCQPCPCYGAPAAGQAAHTCFLDTDGHPTCDSCSPGHSGRHCERCAPGYYGNPSQGQPCHRDGQVPEVLGCGCDPHGSISSQCDAAGQCQCKAQVEGRSCSHCRPHHFHLSASNPEGCLPCFCMGVTQQCASSSYSRQLISTHFAPGDFQGFALVNPQRNSQLTGGFTVEPVHDGARLSFSNFAHLGQESFYWQLPEIYQGDKVAAYGGKLRYTLSYTAGPQGSPLLDPDIQITGNNIMLVASQPALQGPERRSYEIIFREEFWRRPDGQPATREHLLMALADLDELLVRATFSSVPRAASISAVSLEGAQPGPSSGPRALEVEECRCPPGYVGLSCQDCAPGYTRTGSGLYLGQCELCECNGHSDLCHPETGACSRCQHNTAGEFCELCATGYYGDATAGTPEDCQPCACPLTNPENMFSRTCESLGAGGYRCTACEPGYTGQYCEQCAPGYEGDPNVQGGRCQPLTKESLEVQIHPSRSVVPQGGPHSLRCQVSGSPPHYFYWSREDGRPLPSSAQQRHQGSELHFPSVQPSDAGVYICTCRNLIHTSNSRAELLVAEAPSKPIMVTVEEQRSQSVRPGADVTFICTAKSKSPAYTLVWTRLHNGKLPSRAMDFNGILTIRNVQPSDAGTYVCTGSNMFAMDQGTATLHVQVSGTSTAPVASIHPPQLTVQPGQQAEFRCSATGNPTPMLEWIGGPSGQLPAKAQIHNGILRLPAIEPSDQGQYLCRALSSAGQHVARAMLQVHGGSGPRVQVSPERTQVHEGRTVRLYCRAAGVPSASITWRKEGGSLPFRHQAHGSRLRLHHMSVADSGEYVCRANNNIDAQETSIMISVSPSTNSPPAPASPAPIRIESSSSRVAEGQTLDLNCVVPGHAHAQVTWHKRGGSLPTHHQTHGSRLRLYQVSSADSGEYVCSVLSSSGPLEASVLVSITPAAANVHIPGVVPPIRIETSSSRVAEGQTLDLSCVVPGQAHAQVTWHKRGGSLPAGHQVHGHMLRLNRVSPADSGEYSCQVTGSSGTLEASVLVTIEASEPSPIPAPGLAQPVYIESSSSHLTEGQTVDLKCVVPGQAHAQVTWHKRGSSLPARHQTHGSLLRLYQLSPADSGEYVCQVAGSSHPEHEASFKLTVPSSQNSSFRLRSPVISIEPPSSTVQQGQDASFKCLIHEGAMPIKVEWKIRDQELEDNVHISPNGSIITIVAPGPATMEPTACVASNVYGMAQSVVNLSVHGPPTVSVLPEGPVHVKMGKDITLECISSGEPRSSPRWTRLGIPVKLEPRMFGLMNSHAMLKIASVKPSDAGTYVCQAQNALGTAQKQVELIVDTGTVAPGTPQVQVEESELTLEAGHTATLHCSATGNPPPTIHWSKLRAPLPWQHRIEGNTLVIPRVAQQDSGQYICNATNSAGHTEATVVLHVESPPYATIIPEHTSAQPGNLVQLQCLAHGTPPLTYQWSLVGGVLPEKAVVRNQLLRLEPTVPEDSGRYRCQVSNRVGSAEAFAQVLVQGSSSNLPDTSIPGGSTPTVQVTPQLETRNIGASVEFHCAVPNERGTHLRWLKEGGQLPPGHSVQDGVLRIQNLDQNCQGTYVCQAHGPWGQAQATAQLIVQALPSVLINVRTSVHSVVVGHSVEFECLALGDPKPQVTWSKVGGHLRPGIVQSGTIIRIAHVELADAGQYRCAATNAAGTTQSHVLLLVQALPQISTPPEIRVPAGSAAVFPCMASGYPTPAITWSKVDGDLPPDSRLENNMLMLPSVRPEDAGTYVCTATNRQGKVKAFAYLQVPERVIPYFTQTPYSFLPLPTIKDAYRKFEIKITFRPDSADGMLLYNGQKRSPTNLANRQPDFISFGLVGGRPEFRFDAGSGMATIRHPTPLALGQFHTVTLLRSLTQGSLIVGNLAPVNGTSQGKFQGLDLNEELYLGGYPDYGAIPKAGLSSGFVGCVRELRIQGEEIVFHDVNLTTHGISHCPTCQDRPCQNGGQCQDSESSSYTCVCPAGFTAAAVNIRKPCTATPSLWADATCVNRPDGRGYTCRCHLGRSGVRCEEGVTVTTPSMSGAGSYLALPALTNTHHELRLDVEFKPLEPNGILLFSGGKSGPVEDFVSLAMVGGHLEFRYELGSGLAVLRSHEPLALGRWHRVSAERLNKDGSLRVDGGRPVLRSSPGKSQGLNLHTLLYLGGVEPSVQLSPATNMSAHFHGCVGEVSVNGKRLDLTYSFLGSQGVGQCYDSSPCERQPCRNGATCMPAGEYEFQCLCQDGFKGDLCEHEENPCQLHEPCLNGGTCRGARCLCLPGFSGPRCQQGAGYGVVESDWHPEGSGGNDAPGQYGAYFYDNGFLGLPGNSFSRSLPEVPETIEFEVRTSTADGLLLWQGVVREASRSKDFISLGLQDGHLVFSYQLGSGEARLVSGDPINDGEWHRITALREGQRGSIQVDGEDLVTGRSPGPNVAVNTKDIIYIGGAPDVATLTRGKFSSGITGCIKNLVLHTARPGAPPPQPLDLQHRAQAGANTRPCPS.

An N-terminal signal peptide occupies residues 1–21 (MGQRAVGSLLLGLLLHARLLA). O-linked (Xyl...) (heparan sulfate) serine glycans are attached at residues Ser65, Ser71, and Ser76. In terms of domain architecture, SEA spans 80 to 191 (QMVYFRALVN…WGFKFRRLGT (112 aa)). Asn89 carries N-linked (GlcNAc...) asparagine glycosylation. LDL-receptor class A domains follow at residues 195 to 234 (FPRV…ELNC), 281 to 319 (GPSA…ELGC), 320 to 359 (ASPP…EANC), and 360 to 403 (SVKQ…EFGC). 13 disulfides stabilise this stretch: Cys199–Cys212, Cys206–Cys225, Cys219–Cys234, Cys285–Cys297, Cys292–Cys310, Cys304–Cys319, Cys325–Cys337, Cys332–Cys350, Cys344–Cys359, Cys368–Cys381, Cys375–Cys394, Cys388–Cys403, and Cys428–Cys479. The N-linked (GlcNAc...) asparagine glycan is linked to Asn358. Residues 404 to 504 (MPPQVVTPPQ…VLELVPQRGP (101 aa)) form the Ig-like C2-type 1 domain. The region spanning 521–530 (CFCFGVTNVC) is the Laminin EGF-like 1; first part domain. Positions 538 to 730 (DQIRLSFDQP…IHGRAHSVEE (193 aa)) constitute a Laminin IV type A 1 domain. Asn554 is a glycosylation site (N-linked (GlcNAc...) asparagine). Residues 731–763 (CRCPIGYSGLSCESCDAHFTRVPGGPYLGTCSG) enclose the Laminin EGF-like 1; second part domain. Intrachain disulfides connect Cys764–Cys773, Cys766–Cys780, Cys783–Cys792, Cys795–Cys811, Cys814–Cys829, Cys816–Cys839, Cys842–Cys851, Cys854–Cys869, Cys879–Cys892, Cys894–Cys903, and Cys906–Cys921. Laminin EGF-like domains lie at 764 to 813 (CNCN…ACRP) and 814 to 871 (CPCP…KCRP). Residues 879 to 923 (CDERGSLGTSGETCRCKNNVVGRLCNECSDGSFHLSKQNPDGCLK) enclose the Laminin EGF-like 4; truncated domain. Residues 924-933 (CFCMGVSRQC) form the Laminin EGF-like 5; first part domain. A Laminin IV type A 2 domain is found at 941–1125 (AQVLGASEQP…GQDSAREVEQ (185 aa)). Residues 1126-1158 (CTCPPGYRGPSCQDCDTGYTRVPSGLYLGTCER) enclose the Laminin EGF-like 5; second part domain. Cystine bridges form between Cys1159–Cys1168, Cys1161–Cys1175, Cys1178–Cys1187, Cys1190–Cys1206, Cys1209–Cys1224, Cys1211–Cys1234, Cys1237–Cys1246, Cys1249–Cys1263, Cys1275–Cys1287, Cys1277–Cys1293, Cys1295–Cys1304, and Cys1307–Cys1322. Laminin EGF-like domains are found at residues 1159–1208 (CNCH…DCQP), 1209–1265 (CPCY…PCHR), and 1275–1324 (CGCD…GCLP). One can recognise a Laminin EGF-like 9; first part domain in the interval 1325 to 1334 (CFCMGVTQQC). Positions 1344-1529 (ISTHFAPGDF…SGPRALEVEE (186 aa)) constitute a Laminin IV type A 3 domain. Positions 1530–1562 (CRCPPGYVGLSCQDCAPGYTRTGSGLYLGQCEL) constitute a Laminin EGF-like 9; second part domain. Cystine bridges form between Cys1563–Cys1572, Cys1565–Cys1579, Cys1582–Cys1591, Cys1594–Cys1610, Cys1613–Cys1628, Cys1615–Cys1638, Cys1641–Cys1650, and Cys1653–Cys1668. 2 Laminin EGF-like domains span residues 1563–1612 (CECN…DCQP) and 1613–1670 (CACP…RCQP). Ig-like C2-type domains follow at residues 1677–1771 (EVQI…KPIM), 1772–1865 (VTVE…STAP), 1866–1954 (VASI…GGSG), 1955–2049 (PRVQ…PAPA), 2050–2148 (SPAP…PGVV), 2149–2244 (PPIR…PAPG), 2245–2343 (LAQP…RLRS), 2344–2436 (PVIS…PPTV), 2437–2532 (SVLP…APGT), 2533–2619 (PQVQ…VESP), 2620–2720 (PYAT…GGST), 2721–2809 (PTVQ…ALPS), 2810–2895 (VLIN…LVQA), and 2896–2980 (LPQI…LQVP). The disordered stretch occupies residues 1713 to 1733 (DGRPLPSSAQQRHQGSELHFP). Intrachain disulfides connect Cys1792–Cys1839, Cys1886–Cys1932, and Cys1976–Cys2021. Residues 2039–2061 (SPSTNSPPAPASPAPIRIESSSS) form a disordered region. The segment covering 2052 to 2061 (APIRIESSSS) has biased composition (low complexity). 3 cysteine pairs are disulfide-bonded: Cys2073–Cys2118, Cys2170–Cys2215, and Cys2268–Cys2313. 3 N-linked (GlcNAc...) asparagine glycosylation sites follow: Asn2336, Asn2394, and Asn2427. Cys2365 and Cys2413 are joined by a disulfide. Cystine bridges form between Cys2456-Cys2506 and Cys2554-Cys2599. The N-linked (GlcNAc...) asparagine glycan is linked to Asn2600. A disulfide bridge connects residues Cys2641 and Cys2686. Disulfide bonds link Cys2831/Cys2876 and Cys2917/Cys2962. Positions 2984-3162 (IPYFTQTPYS…VNLTTHGISH (179 aa)) constitute a Laminin G-like 1 domain. 2 N-linked (GlcNAc...) asparagine glycosylation sites follow: Asn3098 and Asn3154. 5 disulfide bridges follow: Cys3137-Cys3163, Cys3166-Cys3177, Cys3171-Cys3187, Cys3204-Cys3216, and Cys3229-Cys3238. The EGF-like domain occupies 3163 to 3241 (CPTCQDRPCQ…GRSGVRCEEG (79 aa)). One can recognise a Laminin G-like 2 domain in the interval 3245-3425 (TTPSMSGAGS…VGQCYDSSPC (181 aa)). Asn3385 carries N-linked (GlcNAc...) asparagine glycosylation. Disulfide bonds link Cys3393–Cys3419, Cys3425–Cys3436, Cys3430–Cys3446, Cys3448–Cys3457, Cys3464–Cys3476, Cys3470–Cys3481, and Cys3483–Cys3492. O-linked (Xyl...) (chondroitin sulfate) serine glycosylation is present at Ser3510. The 188-residue stretch at 3518 to 3705 (QYGAYFYDNG…AQAGANTRPC (188 aa)) folds into the Laminin G-like 3 domain. Ca(2+)-binding residues include Asp3574 and Leu3591. The mediates motor neuron attachment stretch occupies residues 3615–3617 (LRE). Ca(2+)-binding residues include Ala3641 and Asn3643. The cysteines at positions 3671 and 3705 are disulfide-linked. The tract at residues 3680–3707 (ARPGAPPPQPLDLQHRAQAGANTRPCPS) is disordered.

Has a strong tendency to aggregate in dimers or stellate structures. Interacts with other basement membrane components such as laminin, prolargin and collagen type IV. Interacts with COL13A1. Interacts with FGFBP1. Interacts with VWA1. Interacts (via C-terminus) with ECM1 (via C-terminus). Interacts with SVEP1. Post-translationally, proteolytic processing produces the C-terminal angiogenic peptide, endorepellin. This peptide can be further processed to produce the LG3 peptide. O-glycosylated. Contains three heparan sulfate chains. Also contains chondroitin sulfate.

The protein resides in the secreted. It localises to the extracellular space. The protein localises to the extracellular matrix. It is found in the basement membrane. In terms of biological role, integral component of basement membranes. Component of the glomerular basement membrane (GBM), responsible for the fixed negative electrostatic membrane charge, and which provides a barrier which is both size- and charge-selective. It serves as an attachment substrate for cells. Plays essential roles in vascularization. Critical for normal heart development and for regulating the vascular response to injury. Also required for avascular cartilage development. Its function is as follows. Anti-angiogenic and anti-tumor peptide that inhibits endothelial cell migration, collagen-induced endothelial tube morphogenesis and blood vessel growth in the chorioallantoic membrane. Blocks endothelial cell adhesion to fibronectin and type I collagen. Anti-tumor agent in neovascularization. Interaction with its ligand, integrin alpha2/beta1, is required for the anti-angiogenic properties. Evokes a reduction in phosphorylation of receptor tyrosine kinases via alpha2/beta1 integrin-mediated activation of the tyrosine phosphatase, PTPN6. Functionally, has anti-angiogenic properties that require binding of calcium ions for full activity. In Mus musculus (Mouse), this protein is Basement membrane-specific heparan sulfate proteoglycan core protein (Hspg2).